The primary structure comprises 76 residues: Small ribosomal subunit protein bS18 (76 aa).

The protein belongs to the bacterial ribosomal protein bS18 family. Part of the 30S ribosomal subunit. Forms a tight heterodimer with protein bS6.

Binds as a heterodimer with protein bS6 to the central domain of the 16S rRNA, where it helps stabilize the platform of the 30S subunit. The sequence is that of Small ribosomal subunit protein bS18 from Neisseria gonorrhoeae (strain ATCC 700825 / FA 1090).